Reading from the N-terminus, the 88-residue chain is Small ribosomal subunit protein bS18A (88 aa).

This sequence belongs to the bacterial ribosomal protein bS18 family. Part of the 30S ribosomal subunit. Forms a tight heterodimer with protein bS6.

Binds as a heterodimer with protein bS6 to the central domain of the 16S rRNA, where it helps stabilize the platform of the 30S subunit. This is Small ribosomal subunit protein bS18A from Mycolicibacterium gilvum (strain PYR-GCK) (Mycobacterium gilvum (strain PYR-GCK)).